Here is a 436-residue protein sequence, read N- to C-terminus: 3-ketoacyl-CoA thiolase (436 aa).

Catalysis depends on cysteine 99, which acts as the Acyl-thioester intermediate. Catalysis depends on proton acceptor residues histidine 392 and cysteine 422.

This sequence belongs to the thiolase-like superfamily. Thiolase family. As to quaternary structure, heterotetramer of two alpha chains (FadJ) and two beta chains (FadI).

It is found in the cytoplasm. The catalysed reaction is an acyl-CoA + acetyl-CoA = a 3-oxoacyl-CoA + CoA. Its pathway is lipid metabolism; fatty acid beta-oxidation. In terms of biological role, catalyzes the final step of fatty acid oxidation in which acetyl-CoA is released and the CoA ester of a fatty acid two carbons shorter is formed. The protein is 3-ketoacyl-CoA thiolase of Escherichia coli O8 (strain IAI1).